Here is a 130-residue protein sequence, read N- to C-terminus: Small ribosomal subunit protein uS9 (130 aa).

It belongs to the universal ribosomal protein uS9 family.

This Pseudomonas putida (strain W619) protein is Small ribosomal subunit protein uS9.